A 194-amino-acid polypeptide reads, in one-letter code: Adapter protein MecA 2 (194 aa).

This sequence belongs to the MecA family. Homodimer.

Functionally, enables the recognition and targeting of unfolded and aggregated proteins to the ClpC protease or to other proteins involved in proteolysis. Also involved in Spx degradation by ClpC. Acts negatively in the development of competence by binding ComK and recruiting it to the ClpCP protease. When overexpressed, inhibits sporulation. The protein is Adapter protein MecA 2 (mecB) of Bacillus subtilis (strain 168).